Reading from the N-terminus, the 228-residue chain is Probable GTP-binding protein EngB (228 aa).

An EngB-type G domain is found at 48 to 222 (YGLEVAFVGY…QFVLNNWFSS (175 aa)). Residues 56–63 (GYSNSGKS), 83–87 (GRTRL), 101–104 (DFPG), 168–171 (NKMD), and 201–203 (FSS) each bind GTP. Mg(2+) contacts are provided by serine 63 and threonine 85.

It belongs to the TRAFAC class TrmE-Era-EngA-EngB-Septin-like GTPase superfamily. EngB GTPase family. Mg(2+) serves as cofactor.

Necessary for normal cell division and for the maintenance of normal septation. The protein is Probable GTP-binding protein EngB of Buchnera aphidicola subsp. Baizongia pistaciae (strain Bp).